The sequence spans 65 residues: Ferredoxin-like protein in vnf region (65 aa).

2 consecutive 4Fe-4S ferredoxin-type domains span residues Ala-2 to Gly-29 and Gly-30 to Asp-65. [4Fe-4S] cluster-binding residues include Cys-10, Cys-13, Cys-16, Cys-20, Cys-39, Cys-42, Cys-50, and Cys-54.

[4Fe-4S] cluster is required as a cofactor.

The polypeptide is Ferredoxin-like protein in vnf region (Azotobacter chroococcum mcd 1).